Consider the following 371-residue polypeptide: Protease PrtS (371 aa).

Histidine 169 lines the Zn(2+) pocket. Glutamate 170 is a catalytic residue. Residues histidine 173 and glutamate 193 each contribute to the Zn(2+) site. The active-site Proton donor is the histidine 273. A disordered region spans residues 352–371; that stretch reads KEEDKDKGKDEGKDKAETKV.

Belongs to the peptidase M4 family. Requires Zn(2+) as cofactor.

It is found in the secreted. Its activity is regulated as follows. Inhibited by 8 mM 1,10-phenanthroline, but not by EDTA or PMSF. Metalloprotease involved in the inhibition of insect antibacterial peptides. Reduces the antibacterial activity of G.mellonella hemolymph by 50%. Reduces the antibacterial activity of cecropin A by 80% and completely inhibits cecropin B. The sequence is that of Protease PrtS from Photorhabdus sp. (strain Az29).